The sequence spans 104 residues: Seminal ribonuclease (104 aa).

Cystine bridges form between Cys12–Cys70, Cys26–Cys81, Cys44–Cys96, and Cys51–Cys58. Substrate is bound by residues 27–31, Lys52, and Arg71; that span reads KPVNT.

This sequence belongs to the pancreatic ribonuclease family. As to quaternary structure, homodimer; disulfide-linked.

It localises to the secreted. It catalyses the reaction an [RNA] containing cytidine + H2O = an [RNA]-3'-cytidine-3'-phosphate + a 5'-hydroxy-ribonucleotide-3'-[RNA].. The enzyme catalyses an [RNA] containing uridine + H2O = an [RNA]-3'-uridine-3'-phosphate + a 5'-hydroxy-ribonucleotide-3'-[RNA].. This chain is Seminal ribonuclease (SRN), found in Saiga tatarica (Saiga antelope).